Reading from the N-terminus, the 299-residue chain is ClpXP adapter protein SpxH (299 aa).

The protein belongs to the SpxH family. As to quaternary structure, interacts with Spx. Interacts with SpxO/YuzO.

The protein localises to the cytoplasm. Its activity is regulated as follows. Irreversible aggregation upon several stress conditions prevents interaction with Spx and therefore leads to Spx stabilization. Inhibited by interaction with SpxO/YuzO. Functionally, adapter protein required for efficient degradation of Spx by ClpXP under non-stress conditions. Interaction with Spx stabilizes Spx and exposes the C-terminus of Spx for recognition and proteolysis by ClpXP. Is specific for Spx and does not enhance proteolysis by ClpCP protease. Probably binds 2 zinc ions. In Bacillus subtilis (strain 168), this protein is ClpXP adapter protein SpxH.